The sequence spans 358 residues: tRNA pseudouridine synthase B (358 aa).

The tract at residues 1-50 (MTTPDAAIDSKISDSNGADKNKSAADDNAFNAPGRKRHHNNQPRRDKRDV) is disordered. D87 (nucleophile) is an active-site residue.

Belongs to the pseudouridine synthase TruB family. Type 1 subfamily.

The enzyme catalyses uridine(55) in tRNA = pseudouridine(55) in tRNA. Its function is as follows. Responsible for synthesis of pseudouridine from uracil-55 in the psi GC loop of transfer RNAs. This is tRNA pseudouridine synthase B from Nitrobacter winogradskyi (strain ATCC 25391 / DSM 10237 / CIP 104748 / NCIMB 11846 / Nb-255).